The following is a 118-amino-acid chain: Large ribosomal subunit protein bL20 (118 aa).

Belongs to the bacterial ribosomal protein bL20 family.

In terms of biological role, binds directly to 23S ribosomal RNA and is necessary for the in vitro assembly process of the 50S ribosomal subunit. It is not involved in the protein synthesizing functions of that subunit. The chain is Large ribosomal subunit protein bL20 from Ralstonia pickettii (strain 12J).